A 339-amino-acid polypeptide reads, in one-letter code: Dihydroorotate dehydrogenase (quinone) (339 aa).

Residues 62–66 (AGMDK) and threonine 86 contribute to the FMN site. Residue lysine 66 coordinates substrate. Substrate is bound at residue 111-115 (NRMGF). Residues asparagine 139 and asparagine 172 each coordinate FMN. Asparagine 172 contributes to the substrate binding site. The active-site Nucleophile is serine 175. A substrate-binding site is contributed by asparagine 177. Positions 217 and 245 each coordinate FMN. 246-247 (NT) is a substrate binding site. FMN is bound by residues glycine 268, glycine 297, and 318–319 (YS).

This sequence belongs to the dihydroorotate dehydrogenase family. Type 2 subfamily. Monomer. The cofactor is FMN.

Its subcellular location is the cell membrane. It carries out the reaction (S)-dihydroorotate + a quinone = orotate + a quinol. It functions in the pathway pyrimidine metabolism; UMP biosynthesis via de novo pathway; orotate from (S)-dihydroorotate (quinone route): step 1/1. In terms of biological role, catalyzes the conversion of dihydroorotate to orotate with quinone as electron acceptor. In Shewanella sediminis (strain HAW-EB3), this protein is Dihydroorotate dehydrogenase (quinone).